The chain runs to 460 residues: Proton extrusion protein PxcA (460 aa).

Residues 84–194 (RLPDPEQNGS…KTNLDNSNAP (111 aa)) are disordered. The segment covering 114-136 (NDGKDAENGRQSRDPSILEKLEF) has biased composition (basic and acidic residues). The segment covering 167–194 (LTSSQPEPSDPSIKTNLAKTNLDNSNAP) has biased composition (polar residues). 4 helical membrane passes run 242 to 262 (FLLL…HFLF), 337 to 357 (GLKN…LILI), 373 to 393 (IYGL…DVFV), and 420 to 440 (FIYG…KYWI).

Belongs to the CemA family.

The protein resides in the cell inner membrane. Its function is as follows. Required for H(+) efflux immediately after light irradiation to form a rapid H(+) concentration gradient across the thylakoid membranes. Together with PxcL, contributes to transient H(+) uptake following dark to light transition. The protein is Proton extrusion protein PxcA of Synechococcus sp. (strain JA-3-3Ab) (Cyanobacteria bacterium Yellowstone A-Prime).